Here is a 156-residue protein sequence, read N- to C-terminus: Transcription antitermination protein NusB (156 aa).

The protein belongs to the NusB family.

In terms of biological role, involved in transcription antitermination. Required for transcription of ribosomal RNA (rRNA) genes. Binds specifically to the boxA antiterminator sequence of the ribosomal RNA (rrn) operons. This chain is Transcription antitermination protein NusB, found in Mycobacterium bovis (strain ATCC BAA-935 / AF2122/97).